The chain runs to 647 residues: 1-deoxy-D-xylulose-5-phosphate synthase (647 aa).

Thiamine diphosphate-binding positions include His74 and 115–117 (GHS). Asp146 contacts Mg(2+). Thiamine diphosphate contacts are provided by residues 147–148 (GA), Asn175, Tyr286, and Glu367. A Mg(2+)-binding site is contributed by Asn175.

It belongs to the transketolase family. DXPS subfamily. As to quaternary structure, homodimer. It depends on Mg(2+) as a cofactor. The cofactor is thiamine diphosphate.

The enzyme catalyses D-glyceraldehyde 3-phosphate + pyruvate + H(+) = 1-deoxy-D-xylulose 5-phosphate + CO2. It participates in metabolic intermediate biosynthesis; 1-deoxy-D-xylulose 5-phosphate biosynthesis; 1-deoxy-D-xylulose 5-phosphate from D-glyceraldehyde 3-phosphate and pyruvate: step 1/1. Functionally, catalyzes the acyloin condensation reaction between C atoms 2 and 3 of pyruvate and glyceraldehyde 3-phosphate to yield 1-deoxy-D-xylulose-5-phosphate (DXP). The chain is 1-deoxy-D-xylulose-5-phosphate synthase from Heliobacterium modesticaldum (strain ATCC 51547 / Ice1).